The following is a 117-amino-acid chain: Large ribosomal subunit protein uL18 (117 aa).

The protein belongs to the universal ribosomal protein uL18 family. Part of the 50S ribosomal subunit; part of the 5S rRNA/L5/L18/L25 subcomplex. Contacts the 5S and 23S rRNAs.

Functionally, this is one of the proteins that bind and probably mediate the attachment of the 5S RNA into the large ribosomal subunit, where it forms part of the central protuberance. The polypeptide is Large ribosomal subunit protein uL18 (Enterobacter sp. (strain 638)).